The sequence spans 416 residues: Keratin, type I cuticular Ha1 (416 aa).

Positions 2 to 56 are head; that stretch reads PYNCCLPALSCRTSCSSRPCVPPSCHGCTLPGACNIPANVGNCNWFCEGSFNGNE. One can recognise an IF rod domain in the interval 56–367; that stretch reads EKETMQFLND…GLLESEDCKL (312 aa). The coil 1A stretch occupies residues 57–91; it reads KETMQFLNDRLASYMEKVRQLERENAELECRIQER. The linker 1 stretch occupies residues 92-102; it reads NQQQDPLVCPA. The interval 103–203 is coil 1B; sequence YQAYFRTIEE…HEEEVNTLRC (101 aa). Residues 204 to 219 are linker 12; the sequence is QLGDRLNVEVDAAPTV. Positions 220-363 are coil 2; sequence DLNRVLNETR…NTYRGLLESE (144 aa). The segment at 364 to 416 is tail; the sequence is DCKLPCNPCATSNACGKPIGPCVSNPCVPCPPPAPCTPCVPRPRCGPCNSFVR.

Belongs to the intermediate filament family.

This Mus musculus (Mouse) protein is Keratin, type I cuticular Ha1 (Krt31).